Reading from the N-terminus, the 307-residue chain is Protoheme IX farnesyltransferase (307 aa).

The next 9 membrane-spanning stretches (helical) occupy residues 31–51, 53–73, 103–123, 125–145, 153–173, 179–199, 223–243, 246–266, and 285–305; these read VTQLAVFCAIIGMFLATPGMV, WPVLIGGAAGIWLLAGAAFAI, TLVFSAILGGAGMWLLHVYAN, LTMWLTFATFLGYAVVYTILL, IVIGGLSGAMPPALGWAAVAG, AWFLVLIIFTWTPPHFWALAL, LLHILLYTLIMIAATLLPFVY, SGYIYLAAALALGAGFLAYAW, and ILYLSLLFAALLVDHYFKFVP.

This sequence belongs to the UbiA prenyltransferase family. Protoheme IX farnesyltransferase subfamily.

It is found in the cell inner membrane. It catalyses the reaction heme b + (2E,6E)-farnesyl diphosphate + H2O = Fe(II)-heme o + diphosphate. The protein operates within porphyrin-containing compound metabolism; heme O biosynthesis; heme O from protoheme: step 1/1. Functionally, converts heme B (protoheme IX) to heme O by substitution of the vinyl group on carbon 2 of heme B porphyrin ring with a hydroxyethyl farnesyl side group. This Cupriavidus taiwanensis (strain DSM 17343 / BCRC 17206 / CCUG 44338 / CIP 107171 / LMG 19424 / R1) (Ralstonia taiwanensis (strain LMG 19424)) protein is Protoheme IX farnesyltransferase.